A 153-amino-acid chain; its full sequence is NADPH-dependent 7-cyano-7-deazaguanine reductase (153 aa).

The disordered stretch occupies residues 1–22 (MTDNRYDNLGQLGTSTPLPDNP). Cys-51 acts as the Thioimide intermediate in catalysis. The active-site Proton donor is Asp-58. Residues 73-75 (VES) and 92-93 (HE) each bind substrate.

Belongs to the GTP cyclohydrolase I family. QueF type 1 subfamily.

It is found in the cytoplasm. The catalysed reaction is 7-aminomethyl-7-carbaguanine + 2 NADP(+) = 7-cyano-7-deazaguanine + 2 NADPH + 3 H(+). The protein operates within tRNA modification; tRNA-queuosine biosynthesis. Functionally, catalyzes the NADPH-dependent reduction of 7-cyano-7-deazaguanine (preQ0) to 7-aminomethyl-7-deazaguanine (preQ1). The polypeptide is NADPH-dependent 7-cyano-7-deazaguanine reductase (Maricaulis maris (strain MCS10) (Caulobacter maris)).